Reading from the N-terminus, the 196-residue chain is Orotate phosphoribosyltransferase (196 aa).

Glutamate 117–serine 125 provides a ligand contact to 5-phospho-alpha-D-ribose 1-diphosphate. Orotate-binding residues include threonine 121 and arginine 149.

The protein belongs to the purine/pyrimidine phosphoribosyltransferase family. PyrE subfamily. Homodimer. Mg(2+) serves as cofactor.

The catalysed reaction is orotidine 5'-phosphate + diphosphate = orotate + 5-phospho-alpha-D-ribose 1-diphosphate. Its pathway is pyrimidine metabolism; UMP biosynthesis via de novo pathway; UMP from orotate: step 1/2. In terms of biological role, catalyzes the transfer of a ribosyl phosphate group from 5-phosphoribose 1-diphosphate to orotate, leading to the formation of orotidine monophosphate (OMP). In Methylobacterium sp. (strain 4-46), this protein is Orotate phosphoribosyltransferase.